The chain runs to 180 residues: MTPAKIRNALLAVVAIALSAAVYLGFQTQTQGISLEAQAQRAIPLATALDNGRPTLVEFYADWCTSCQAMAPDLAELKKNYGGSVNFAMLNVDNNKWLPEVLRYRVDGIPHFVYLDDTGTAIAESIGEQPLRVLEQNITALVAHEPIPYANVTGQTSVVENRTIEADPTSPRSHGNPRPS.

A helical membrane pass occupies residues 10–26 (LLAVVAIALSAAVYLGF). Positions 34-143 (SLEAQAQRAI…LEQNITALVA (110 aa)) constitute a Thioredoxin domain. Cys64 and Cys67 form a disulfide bridge.

The protein belongs to the thioredoxin family.

The protein resides in the cell membrane. Functionally, required for disulfide bond formation in some proteins. Acts by transferring its disulfide bond to other proteins and is reduced in the process. This Synechocystis sp. (strain ATCC 27184 / PCC 6803 / Kazusa) protein is Thiol:disulfide interchange protein TxlA homolog (txlA).